We begin with the raw amino-acid sequence, 198 residues long: Small ribosomal subunit protein eS1 (198 aa).

Belongs to the eukaryotic ribosomal protein eS1 family.

The polypeptide is Small ribosomal subunit protein eS1 (Methanospirillum hungatei JF-1 (strain ATCC 27890 / DSM 864 / NBRC 100397 / JF-1)).